Consider the following 821-residue polypeptide: Envelope glycoprotein gp160 (821 aa).

Topologically, residues 1-737 are extracellular; sequence MSTGNVYQEL…FTWWVQYLKW (737 aa). A disulfide bridge connects residues C67 and C80. N-linked (GlcNAc...) asparagine; by host glycosylation is found at N71, N98, N144, N175, N190, N215, N224, N266, N287, N333, N383, N389, N394, N423, N447, and N516. 4 cysteine pairs are disulfide-bonded: C127–C232, C134–C223, C139–C187, and C244–C272. The tract at residues 139–186 is V1; the sequence is CQETENVSATTAKPITTPTTTSTVASSTEIYLDVDKNNTEEKVERNHV. The V2 stretch occupies residues 187–223; the sequence is CRYNITGLCRDSKEEIVTNFRGDDVKCENNTCYMNHC. The interval 328–361 is V3; sequence CHRKGNRSVVSTPSATGLLFYHGLEPGKNLKKGM. 2 disulfides stabilise this stretch: C439/C499 and C446/C469. The segment at 446 to 469 is V4; that stretch reads CNVTRIMRAWNDPNEKKWYPYASC. The interval 515–526 is V5; the sequence is SNETKMQIKFLP. The segment at 570-590 is fusion peptide; the sequence is GAVILGILGLLSLAGSAMGSV. Residues 607–627 are a coiled coil; the sequence is EQQKQLLKLIEQQSELLKLTI. N-linked (GlcNAc...) asparagine; by host glycosylation is found at N669, N675, and N694. Residues 715 to 736 are MPER; binding to GalCer; sequence KLGDLTSWASWFDFTWWVQYLK. The chain crosses the membrane as a helical span at residues 738–758; it reads GVFLVLGIIGLRILLALWNTI. The Cytoplasmic portion of the chain corresponds to 759–821; that stretch reads SRFRQGYRPV…IEDLTSFARE (63 aa). The YXXV motif; contains endocytosis signal motif lies at 765 to 768; that stretch reads YRPV. The interval 780 to 805 is disordered; it reads KRPDNGEEESNSLELGEHNSENLKEE. The span at 794–805 shows a compositional bias: basic and acidic residues; it reads LGEHNSENLKEE.

The mature envelope protein (Env) consists of a homotrimer of non-covalently associated gp120-gp41 heterodimers. The resulting complex protrudes from the virus surface as a spike. Interacts with host CD4 and CCR5. Gp120 also interacts with the C-type lectins CD209/DC-SIGN and CLEC4M/DC-SIGNR (collectively referred to as DC-SIGN(R)). As to quaternary structure, the mature envelope protein (Env) consists of a homotrimer of non-covalently associated gp120-gp41 heterodimers. The resulting complex protrudes from the virus surface as a spike. In terms of processing, specific enzymatic cleavages in vivo yield mature proteins. Envelope glycoproteins are synthesized as an inactive precursor that is heavily N-glycosylated and processed likely by host cell furin in the Golgi to yield the mature SU and TM proteins. The cleavage site between SU and TM requires the minimal sequence [KR]-X-[KR]-R.

It localises to the virion membrane. The protein resides in the host cell membrane. It is found in the host endosome membrane. Its function is as follows. The surface protein gp120 (SU) attaches the virus to the host lymphoid cell by binding to the primary receptor CD4. This interaction induces a structural rearrangement creating a high affinity binding site for a chemokine coreceptor like CCR5. This peculiar 2 stage receptor-interaction strategy allows gp120 to maintain the highly conserved coreceptor-binding site in a cryptic conformation, protected from neutralizing antibodies. These changes are transmitted to the transmembrane protein gp41 and are thought to activate its fusogenic potential by unmasking its fusion peptide. In terms of biological role, surface protein gp120 (SU) may target the virus to gut-associated lymphoid tissue (GALT) by binding host ITGA4/ITGB7 (alpha-4/beta-7 integrins), a complex that mediates T-cell migration to the GALT. Interaction between gp120 and ITGA4/ITGB7 would allow the virus to enter GALT early in the infection, infecting and killing most of GALT's resting CD4+ T-cells. This T-cell depletion is believed to be the major insult to the host immune system leading to AIDS. The surface protein gp120 is a ligand for CD209/DC-SIGN and CLEC4M/DC-SIGNR, which are respectively found on dendritic cells (DCs), and on endothelial cells of liver sinusoids and lymph node sinuses. These interactions allow capture of viral particles at mucosal surfaces by these cells and subsequent transmission to permissive cells. DCs are professional antigen presenting cells, critical for host immunity by inducing specific immune responses against a broad variety of pathogens. They act as sentinels in various tissues where they take up antigen, process it, and present it to T-cells following migration to lymphoid organs. SIV subverts the migration properties of dendritic cells to gain access to CD4+ T-cells in lymph nodes. Virus transmission to permissive T-cells occurs either in trans (without DCs infection, through viral capture and transmission), or in cis (following DCs productive infection, through the usual CD4-gp120 interaction), thereby inducing a robust infection. In trans infection, bound virions remain infectious over days and it is proposed that they are not degraded, but protected in non-lysosomal acidic organelles within the DCs close to the cell membrane thus contributing to the viral infectious potential during DCs' migration from the periphery to the lymphoid tissues. On arrival at lymphoid tissues, intact virions recycle back to DCs' cell surface allowing virus transmission to CD4+ T-cells. Virion capture also seems to lead to MHC-II-restricted viral antigen presentation, and probably to the activation of SIV-specific CD4+ cells. Functionally, the transmembrane protein gp41 (TM) acts as a class I viral fusion protein. Under the current model, the protein has at least 3 conformational states: pre-fusion native state, pre-hairpin intermediate state, and post-fusion hairpin state. During fusion of viral and target intracellular membranes, the coiled coil regions (heptad repeats) assume a trimer-of-hairpins structure, positioning the fusion peptide in close proximity to the C-terminal region of the ectodomain. The formation of this structure appears to drive apposition and subsequent fusion of viral and target cell membranes. Complete fusion occurs in host cell endosomes. The virus undergoes clathrin-dependent internalization long before endosomal fusion, thus minimizing the surface exposure of conserved viral epitopes during fusion and reducing the efficacy of inhibitors targeting these epitopes. Membranes fusion leads to delivery of the nucleocapsid into the cytoplasm. Its function is as follows. The envelope glycoprotein gp160 precursor down-modulates cell surface CD4 antigen by interacting with it in the endoplasmic reticulum and blocking its transport to the cell surface. In terms of biological role, the gp120-gp41 heterodimer allows rapid transcytosis of the virus through CD4 negative cells such as simple epithelial monolayers of the intestinal, rectal and endocervical epithelial barriers. Both gp120 and gp41 specifically recognize glycosphingolipids galactosyl-ceramide (GalCer) or 3' sulfo-galactosyl-ceramide (GalS) present in the lipid rafts structures of epithelial cells. Binding to these alternative receptors allows the rapid transcytosis of the virus through the epithelial cells. This transcytotic vesicle-mediated transport of virions from the apical side to the basolateral side of the epithelial cells does not involve infection of the cells themselves. This chain is Envelope glycoprotein gp160 (env), found in Cercopithecidae (Old World monkeys).